A 278-amino-acid polypeptide reads, in one-letter code: 4-deoxy-L-threo-5-hexosulose-uronate ketol-isomerase (278 aa).

The Zn(2+) site is built by histidine 196, histidine 198, glutamate 203, and histidine 245.

It belongs to the KduI family. It depends on Zn(2+) as a cofactor.

It catalyses the reaction 5-dehydro-4-deoxy-D-glucuronate = 3-deoxy-D-glycero-2,5-hexodiulosonate. It participates in glycan metabolism; pectin degradation; 2-dehydro-3-deoxy-D-gluconate from pectin: step 4/5. Its function is as follows. Catalyzes the isomerization of 5-dehydro-4-deoxy-D-glucuronate to 3-deoxy-D-glycero-2,5-hexodiulosonate. The chain is 4-deoxy-L-threo-5-hexosulose-uronate ketol-isomerase from Yersinia pseudotuberculosis serotype O:1b (strain IP 31758).